Here is a 300-residue protein sequence, read N- to C-terminus: uncharacterized protein (300 aa).

The Proton donor role is filled by Tyr-53. Residue 210-220 (SPLAGGKVFTE) participates in NADP(+) binding.

The protein belongs to the aldo/keto reductase family. Aldo/keto reductase 2 subfamily.

This is an uncharacterized protein from Bacillus subtilis (strain 168).